The sequence spans 197 residues: Probable adenylyl-sulfate kinase (197 aa).

ATP is bound at residue 33 to 40 (GLSGSGKS). Serine 107 acts as the Phosphoserine intermediate in catalysis.

It belongs to the APS kinase family.

It carries out the reaction adenosine 5'-phosphosulfate + ATP = 3'-phosphoadenylyl sulfate + ADP + H(+). It participates in sulfur metabolism; hydrogen sulfide biosynthesis; sulfite from sulfate: step 2/3. Functionally, catalyzes the synthesis of activated sulfate. This Bacillus subtilis (strain 168) protein is Probable adenylyl-sulfate kinase (cysC).